Here is a 326-residue protein sequence, read N- to C-terminus: Iron-sulfur cluster assembly SufBD family protein PH0883 (326 aa).

The protein belongs to the iron-sulfur cluster assembly SufBD family.

The protein is Iron-sulfur cluster assembly SufBD family protein PH0883 of Pyrococcus horikoshii (strain ATCC 700860 / DSM 12428 / JCM 9974 / NBRC 100139 / OT-3).